The sequence spans 490 residues: Tryptophan 5-hydroxylase 2 (490 aa).

S19 bears the Phosphoserine mark. Polar residues predominate over residues L31 to G42. The interval L31–A58 is disordered. The span at K43–A58 shows a compositional bias: basic and acidic residues. One can recognise an ACT domain in the interval A65–N140. Positions 318, 323, and 363 each coordinate Fe cation.

It belongs to the biopterin-dependent aromatic amino acid hydroxylase family. Interacts with DNAJC12. Fe(2+) is required as a cofactor. As to expression, brain specific.

It catalyses the reaction (6R)-L-erythro-5,6,7,8-tetrahydrobiopterin + L-tryptophan + O2 = 5-hydroxy-L-tryptophan + (4aS,6R)-4a-hydroxy-L-erythro-5,6,7,8-tetrahydrobiopterin. It functions in the pathway aromatic compound metabolism; serotonin biosynthesis; serotonin from L-tryptophan: step 1/2. The polypeptide is Tryptophan 5-hydroxylase 2 (TPH2) (Homo sapiens (Human)).